The primary structure comprises 669 residues: Filensin (669 aa).

Positions 1–33 (MYRRSYVFQARQERYERAQPAGPAAQPGGTAPG) are head. Ser5 carries the post-translational modification Phosphoserine. Residues 33–318 (GLAALQALGE…RIIEIEGSRL (286 aa)) enclose the IF rod domain. Residues 34 to 68 (LAALQALGERVAVQVQRARALQQRHAGLRRQLDAF) are coil 1A. Ala35 carries the post-translational modification N-acetylalanine. The tract at residues 69-77 (QRLGEQPGP) is linker 1. The tract at residues 78 to 177 (EDALARHVEA…RYKKNLLEIQ (100 aa)) is coil 1B. Residues 178 to 194 (TYITVLQQIVQTAPQVS) are linker 12. Positions 195 to 318 (LVTGMRESGL…RIIEIEGSRL (124 aa)) are coil 2. The tail stretch occupies residues 319-669 (SSVFIETPIS…GEKSLPDTRA (351 aa)). Ser339 bears the Phosphoserine mark. Disordered stretches follow at residues 380 to 435 (VEET…GGQI), 449 to 468 (RVSG…FTKG), and 505 to 618 (HHDG…KALS). Residues 408–417 (SQPGAGGGHG) show a composition bias toward gly residues. Gly432 is lipidated: N-myristoyl glycine. The residue at position 513 (Ser513) is a Phosphoserine. Residues 545–570 (NGLRAKEPKDLEEKDDDGKKEAEGSR) are compositionally biased toward basic and acidic residues. Positions 583–593 (PSTSHSQTSGS) are enriched in polar residues. Thr585 carries the phosphothreonine modification.

The protein belongs to the intermediate filament family. In terms of assembly, part of a complex required for lens intermediate filament formation composed of BFSP1, BFSP2 and CRYAA. Identified in a complex that contains VIM, EZR, AHNAK, BFSP1, BFSP2, ANK2, PLEC, PRX and spectrin. Found in a complex composed of PPL (via C-terminal linker domain), BFSP1 and BFSP2 in the retinal lens. Within the complex interacts with BFSP2. Interacts (via C-terminus) with MIP (via C-terminus) in aged lens fiber cells. In terms of processing, proteolytically cleaved during lens cell fiber differentiation with increased fragmentation as fiber cell age increases. Post-translationally, myristoylated at Gly-432 following proteolytic cleavage at Asp-431. Acetylated at Ala-35 following proteolytic cleavage at Leu-34. As to expression, detected in eye lens fiber cells (at protein level). Expressed in retinal lens epithelial cells (at protein level).

It is found in the cell membrane. Its subcellular location is the cytoplasm. It localises to the cytoskeleton. The protein localises to the cell cortex. Required for the correct formation of lens intermediate filaments as part of a complex composed of BFSP1, BFSP2 and CRYAA. Involved in altering the calcium regulation of MIP water permeability. In Mus musculus (Mouse), this protein is Filensin (Bfsp1).